The following is a 485-amino-acid chain: UDP-glycosyltransferase 71B2 (485 aa).

Residues serine 287, 354 to 356 (APQ), 371 to 379 (HCGWNSTLE), and 393 to 396 (YAEQ) contribute to the UDP-alpha-D-glucose site.

It belongs to the UDP-glycosyltransferase family.

Its function is as follows. Glucosyltransferase that glucosylates the cell wall inhibitor hypostatin in vivo to form a bioactive glucoside. This chain is UDP-glycosyltransferase 71B2 (UGT71B2), found in Arabidopsis thaliana (Mouse-ear cress).